The primary structure comprises 359 residues: Phosphoserine aminotransferase (359 aa).

Residue R41 participates in L-glutamate binding. Pyridoxal 5'-phosphate is bound by residues 75–76, W99, T147, D166, and Q189; that span reads AS. K190 carries the post-translational modification N6-(pyridoxal phosphate)lysine. 231-232 serves as a coordination point for pyridoxal 5'-phosphate; sequence NT.

This sequence belongs to the class-V pyridoxal-phosphate-dependent aminotransferase family. SerC subfamily. As to quaternary structure, homodimer. Requires pyridoxal 5'-phosphate as cofactor.

It localises to the cytoplasm. The catalysed reaction is O-phospho-L-serine + 2-oxoglutarate = 3-phosphooxypyruvate + L-glutamate. The enzyme catalyses 4-(phosphooxy)-L-threonine + 2-oxoglutarate = (R)-3-hydroxy-2-oxo-4-phosphooxybutanoate + L-glutamate. It functions in the pathway amino-acid biosynthesis; L-serine biosynthesis; L-serine from 3-phospho-D-glycerate: step 2/3. It participates in cofactor biosynthesis; pyridoxine 5'-phosphate biosynthesis; pyridoxine 5'-phosphate from D-erythrose 4-phosphate: step 3/5. Catalyzes the reversible conversion of 3-phosphohydroxypyruvate to phosphoserine and of 3-hydroxy-2-oxo-4-phosphonooxybutanoate to phosphohydroxythreonine. The chain is Phosphoserine aminotransferase from Azobacteroides pseudotrichonymphae genomovar. CFP2.